We begin with the raw amino-acid sequence, 803 residues long: Ribonucleoside-diphosphate reductase large chain (803 aa).

One can recognise an ATP-cone domain in the interval 1-91 (MYVVNRKGEE…TSNLHKNTSS (91 aa)). Residues 5-6 (NR), 11-17 (EPVSFDQ), Thr52, and Asp56 contribute to the ATP site. A GDP-binding site is contributed by Ser215. Residues Cys216 and Cys442 are joined by a disulfide bond. Residues 224-226 (DSI), Lys241, Arg254, and 261-262 (RG) each bind dTTP. Asn425 lines the GDP pocket. Asn425 functions as the Proton acceptor in the catalytic mechanism. Cys427 serves as the catalytic Cysteine radical intermediate. GDP-binding positions include Glu429 and 604 to 607 (TAST). Glu429 acts as the Proton acceptor in catalysis.

Belongs to the ribonucleoside diphosphate reductase large chain family. As to quaternary structure, heterodimer of a large and a small subunit.

The catalysed reaction is a 2'-deoxyribonucleoside 5'-diphosphate + [thioredoxin]-disulfide + H2O = a ribonucleoside 5'-diphosphate + [thioredoxin]-dithiol. With respect to regulation, under complex allosteric control mediated by deoxynucleoside triphosphates and ATP binding to separate specificity and activation sites on the large subunit. The type of nucleotide bound at the specificity site determines substrate preference. It seems probable that ATP makes the enzyme reduce CDP and UDP, dGTP favors ADP reduction and dTTP favors GDP reduction. Stimulated by ATP and inhibited by dATP binding to the activity site. Functionally, provides the precursors necessary for DNA synthesis. Catalyzes the biosynthesis of deoxyribonucleotides from the corresponding ribonucleotides. The protein is Ribonucleoside-diphosphate reductase large chain (RNR1) of Cryptosporidium parvum.